The primary structure comprises 256 residues: Thiazole synthase (256 aa).

Lys-96 (schiff-base intermediate with DXP) is an active-site residue. Residues Gly-157, 183 to 184, and 205 to 206 contribute to the 1-deoxy-D-xylulose 5-phosphate site; these read AG and NT.

The protein belongs to the ThiG family. In terms of assembly, homotetramer. Forms heterodimers with either ThiH or ThiS.

Its subcellular location is the cytoplasm. The catalysed reaction is [ThiS sulfur-carrier protein]-C-terminal-Gly-aminoethanethioate + 2-iminoacetate + 1-deoxy-D-xylulose 5-phosphate = [ThiS sulfur-carrier protein]-C-terminal Gly-Gly + 2-[(2R,5Z)-2-carboxy-4-methylthiazol-5(2H)-ylidene]ethyl phosphate + 2 H2O + H(+). Its pathway is cofactor biosynthesis; thiamine diphosphate biosynthesis. In terms of biological role, catalyzes the rearrangement of 1-deoxy-D-xylulose 5-phosphate (DXP) to produce the thiazole phosphate moiety of thiamine. Sulfur is provided by the thiocarboxylate moiety of the carrier protein ThiS. In vitro, sulfur can be provided by H(2)S. This Bacillus cereus (strain 03BB102) protein is Thiazole synthase.